We begin with the raw amino-acid sequence, 230 residues long: V-type proton ATPase subunit E (230 aa).

The protein belongs to the V-ATPase E subunit family. V-ATPase is a heteromultimeric enzyme composed of a peripheral catalytic V1 complex (components A to H) attached to an integral membrane V0 proton pore complex (components: a, c, c', c'' and d).

Functionally, subunit of the peripheral V1 complex of vacuolar ATPase essential for assembly or catalytic function. V-ATPase is responsible for acidifying a variety of intracellular compartments in eukaryotic cells. This Citrus limon (Lemon) protein is V-type proton ATPase subunit E (VATE).